The following is a 719-amino-acid chain: Ribosomal RNA large subunit methyltransferase K/L (719 aa).

In terms of domain architecture, THUMP spans 43-154; the sequence is IGYKACLWSR…KGKANITLDL (112 aa).

The protein belongs to the methyltransferase superfamily. RlmKL family.

The protein localises to the cytoplasm. The enzyme catalyses guanosine(2445) in 23S rRNA + S-adenosyl-L-methionine = N(2)-methylguanosine(2445) in 23S rRNA + S-adenosyl-L-homocysteine + H(+). It carries out the reaction guanosine(2069) in 23S rRNA + S-adenosyl-L-methionine = N(2)-methylguanosine(2069) in 23S rRNA + S-adenosyl-L-homocysteine + H(+). Functionally, specifically methylates the guanine in position 2445 (m2G2445) and the guanine in position 2069 (m7G2069) of 23S rRNA. The polypeptide is Ribosomal RNA large subunit methyltransferase K/L (Aeromonas salmonicida (strain A449)).